The chain runs to 313 residues: ADP-L-glycero-D-manno-heptose-6-epimerase (313 aa).

Residues 10–11 (MI), 31–32 (DN), lysine 38, arginine 53, 75–79 (EGACS), and asparagine 92 each bind NADP(+). The Proton acceptor role is filled by tyrosine 139. Residue lysine 143 participates in NADP(+) binding. Asparagine 174 contributes to the substrate binding site. NADP(+) contacts are provided by valine 175 and lysine 183. The Proton acceptor role is filled by lysine 183. Residues serine 185, histidine 192, 206-209 (FAGS), arginine 214, and tyrosine 277 contribute to the substrate site.

The protein belongs to the NAD(P)-dependent epimerase/dehydratase family. HldD subfamily. In terms of assembly, homopentamer. Requires NADP(+) as cofactor.

It catalyses the reaction ADP-D-glycero-beta-D-manno-heptose = ADP-L-glycero-beta-D-manno-heptose. It functions in the pathway nucleotide-sugar biosynthesis; ADP-L-glycero-beta-D-manno-heptose biosynthesis; ADP-L-glycero-beta-D-manno-heptose from D-glycero-beta-D-manno-heptose 7-phosphate: step 4/4. The protein operates within bacterial outer membrane biogenesis; LPS core biosynthesis. Catalyzes the interconversion between ADP-D-glycero-beta-D-manno-heptose and ADP-L-glycero-beta-D-manno-heptose via an epimerization at carbon 6 of the heptose. This Vibrio vulnificus (strain CMCP6) protein is ADP-L-glycero-D-manno-heptose-6-epimerase.